The primary structure comprises 843 residues: Structure-specific endonuclease subunit SLX4 (843 aa).

Disordered stretches follow at residues 26-111, 281-313, 339-377, 603-655, and 729-748; these read SPPS…KTTT, AIPTPTESSTTEDIQGSSSKQQRVKAKKPQKGK, NVAPKSPGRKNISNRPSGMKHSNSGRGKSSTLKNDNGPP, SKTF…AKAL, and ATPNARHSRQRSSSTSFSIE. 2 stretches are compositionally biased toward polar residues: residues 50–69 and 285–301; these read ASFSKTPSRKTTSPDSNGEN and PTESSTTEDIQGSSSKQ. Residues 302 to 311 show a composition bias toward basic residues; that stretch reads QRVKAKKPQK. Polar residues-rich tracts occupy residues 349–372 and 603–616; these read NISNRPSGMKHSNSGRGKSSTLKN and SKTFMPESKPNQGT. A compositionally biased stretch (basic and acidic residues) spans 617 to 636; it reads DDARKNGFRKENHSDVRVRP. Residues 739-748 are compositionally biased toward low complexity; the sequence is RSSSTSFSIE.

Belongs to the SLX4 family. Forms a heterodimer with SLX1. Phosphorylated in response to DNA damage.

Its subcellular location is the nucleus. Its function is as follows. Regulatory subunit of the SLX1-SLX4 structure-specific endonuclease that resolves DNA secondary structures generated during DNA repair and recombination. Has endonuclease activity towards branched DNA substrates, introducing single-strand cuts in duplex DNA close to junctions with ss-DNA. This Ajellomyces capsulatus (strain G186AR / H82 / ATCC MYA-2454 / RMSCC 2432) (Darling's disease fungus) protein is Structure-specific endonuclease subunit SLX4.